The sequence spans 132 residues: Phosphoribosyl-AMP cyclohydrolase (132 aa).

Aspartate 86 is a Mg(2+) binding site. Cysteine 87 provides a ligand contact to Zn(2+). The Mg(2+) site is built by aspartate 88 and aspartate 90. 2 residues coordinate Zn(2+): cysteine 103 and cysteine 110.

The protein belongs to the PRA-CH family. In terms of assembly, homodimer. It depends on Mg(2+) as a cofactor. Zn(2+) is required as a cofactor.

It is found in the cytoplasm. It catalyses the reaction 1-(5-phospho-beta-D-ribosyl)-5'-AMP + H2O = 1-(5-phospho-beta-D-ribosyl)-5-[(5-phospho-beta-D-ribosylamino)methylideneamino]imidazole-4-carboxamide. It participates in amino-acid biosynthesis; L-histidine biosynthesis; L-histidine from 5-phospho-alpha-D-ribose 1-diphosphate: step 3/9. In terms of biological role, catalyzes the hydrolysis of the adenine ring of phosphoribosyl-AMP. The protein is Phosphoribosyl-AMP cyclohydrolase of Clavibacter michiganensis subsp. michiganensis (strain NCPPB 382).